Reading from the N-terminus, the 252-residue chain is Acetoacetate decarboxylase (252 aa).

Lysine 116 acts as the Schiff-base intermediate with acetoacetate in catalysis.

This sequence belongs to the ADC family.

The catalysed reaction is acetoacetate + H(+) = acetone + CO2. Catalyzes the conversion of acetoacetate to acetone and carbon dioxide. This chain is Acetoacetate decarboxylase, found in Paraburkholderia xenovorans (strain LB400).